The following is a 197-amino-acid chain: Imidazoleglycerol-phosphate dehydratase (197 aa).

The protein belongs to the imidazoleglycerol-phosphate dehydratase family.

Its subcellular location is the cytoplasm. It catalyses the reaction D-erythro-1-(imidazol-4-yl)glycerol 3-phosphate = 3-(imidazol-4-yl)-2-oxopropyl phosphate + H2O. Its pathway is amino-acid biosynthesis; L-histidine biosynthesis; L-histidine from 5-phospho-alpha-D-ribose 1-diphosphate: step 6/9. This is Imidazoleglycerol-phosphate dehydratase from Rhodopseudomonas palustris (strain HaA2).